Reading from the N-terminus, the 89-residue chain is Small ribosomal subunit protein uS15 (89 aa).

This sequence belongs to the universal ribosomal protein uS15 family. As to quaternary structure, part of the 30S ribosomal subunit. Forms a bridge to the 50S subunit in the 70S ribosome, contacting the 23S rRNA.

One of the primary rRNA binding proteins, it binds directly to 16S rRNA where it helps nucleate assembly of the platform of the 30S subunit by binding and bridging several RNA helices of the 16S rRNA. Functionally, forms an intersubunit bridge (bridge B4) with the 23S rRNA of the 50S subunit in the ribosome. This is Small ribosomal subunit protein uS15 from Allorhizobium ampelinum (strain ATCC BAA-846 / DSM 112012 / S4) (Agrobacterium vitis (strain S4)).